The primary structure comprises 454 residues: Protein odr-4 homolog (454 aa).

Helical transmembrane passes span 82–102 (MLPGGLLVLGVFIITTLELAN) and 432–452 (IGVIAAFTVAVLAAGISFHYF).

This sequence belongs to the ODR-4 family. In terms of tissue distribution, ubiquitously expressed.

The protein localises to the membrane. May play a role in the trafficking of a subset of G-protein coupled receptors. The sequence is that of Protein odr-4 homolog from Homo sapiens (Human).